A 632-amino-acid chain; its full sequence is 1-deoxy-D-xylulose-5-phosphate synthase (632 aa).

Positions M1–D25 are disordered. Thiamine diphosphate contacts are provided by residues H87 and G128–S130. A Mg(2+)-binding site is contributed by D159. Residues G160–A161, N188, F295, and E378 each bind thiamine diphosphate. N188 lines the Mg(2+) pocket.

This sequence belongs to the transketolase family. DXPS subfamily. As to quaternary structure, homodimer. Requires Mg(2+) as cofactor. It depends on thiamine diphosphate as a cofactor.

It catalyses the reaction D-glyceraldehyde 3-phosphate + pyruvate + H(+) = 1-deoxy-D-xylulose 5-phosphate + CO2. It participates in metabolic intermediate biosynthesis; 1-deoxy-D-xylulose 5-phosphate biosynthesis; 1-deoxy-D-xylulose 5-phosphate from D-glyceraldehyde 3-phosphate and pyruvate: step 1/1. Its function is as follows. Catalyzes the acyloin condensation reaction between C atoms 2 and 3 of pyruvate and glyceraldehyde 3-phosphate to yield 1-deoxy-D-xylulose-5-phosphate (DXP). The polypeptide is 1-deoxy-D-xylulose-5-phosphate synthase (Pseudomonas fluorescens (strain Pf0-1)).